Reading from the N-terminus, the 148-residue chain is UPF0735 ACT domain-containing protein Dred_1164 (148 aa).

The ACT domain occupies 72 to 147 (TLALLMEHQP…GVREVRLVGQ (76 aa)).

Belongs to the UPF0735 family.

The chain is UPF0735 ACT domain-containing protein Dred_1164 from Desulforamulus reducens (strain ATCC BAA-1160 / DSM 100696 / MI-1) (Desulfotomaculum reducens).